Here is a 306-residue protein sequence, read N- to C-terminus: Ribonuclease Z (306 aa).

Residues His63, His65, Asp67, His68, His140, Asp211, and His269 each coordinate Zn(2+). Asp67 serves as the catalytic Proton acceptor.

This sequence belongs to the RNase Z family. Homodimer. Requires Zn(2+) as cofactor.

It catalyses the reaction Endonucleolytic cleavage of RNA, removing extra 3' nucleotides from tRNA precursor, generating 3' termini of tRNAs. A 3'-hydroxy group is left at the tRNA terminus and a 5'-phosphoryl group is left at the trailer molecule.. In terms of biological role, zinc phosphodiesterase, which displays some tRNA 3'-processing endonuclease activity. Probably involved in tRNA maturation, by removing a 3'-trailer from precursor tRNA. This Listeria monocytogenes serotype 4b (strain CLIP80459) protein is Ribonuclease Z.